The following is a 345-amino-acid chain: NADPH dehydrogenase (345 aa).

23-26 (SPMC) provides a ligand contact to FMN. Tyr-28 is a substrate binding site. 2 residues coordinate FMN: Ala-60 and Gln-102. 164–167 (HGAH) contacts substrate. Residues Arg-215 and 307–308 (GR) each bind FMN.

The protein belongs to the NADH:flavin oxidoreductase/NADH oxidase family. NamA subfamily. In terms of assembly, homotetramer. FMN serves as cofactor.

It catalyses the reaction A + NADPH + H(+) = AH2 + NADP(+). Catalyzes the reduction of the double bond of an array of alpha,beta-unsaturated aldehydes and ketones. It also reduces the nitro group of nitroester and nitroaromatic compounds. It could have a role in detoxification processes. The chain is NADPH dehydrogenase from Bacillus cereus (strain ZK / E33L).